The primary structure comprises 443 residues: ATP-dependent protease ATPase subunit HslU (443 aa).

ATP contacts are provided by residues Ile18, 60-65 (GVGKTE), Asp256, Glu321, and Arg393.

Belongs to the ClpX chaperone family. HslU subfamily. As to quaternary structure, a double ring-shaped homohexamer of HslV is capped on each side by a ring-shaped HslU homohexamer. The assembly of the HslU/HslV complex is dependent on binding of ATP.

The protein resides in the cytoplasm. Functionally, ATPase subunit of a proteasome-like degradation complex; this subunit has chaperone activity. The binding of ATP and its subsequent hydrolysis by HslU are essential for unfolding of protein substrates subsequently hydrolyzed by HslV. HslU recognizes the N-terminal part of its protein substrates and unfolds these before they are guided to HslV for hydrolysis. The polypeptide is ATP-dependent protease ATPase subunit HslU (Salmonella typhi).